A 277-amino-acid polypeptide reads, in one-letter code: Large ribosomal subunit protein uL2 (277 aa).

Disordered stretches follow at residues 1-20 (MGIRTFRPYTPGTRQASVSD), 27-55 (TQPEKSLTTYKHSSQGRNNRGVVTSRHRG), and 207-277 (KAGR…RNQS). Residues 27-48 (TQPEKSLTTYKHSSQGRNNRGV) are compositionally biased toward polar residues. 2 stretches are compositionally biased toward basic residues: residues 207–220 (KAGRSRHRGKRPHV) and 259–277 (TRNRKKASSKLIIRRRNQS).

The protein belongs to the universal ribosomal protein uL2 family. In terms of assembly, part of the 50S ribosomal subunit. Forms a bridge to the 30S subunit in the 70S ribosome.

Functionally, one of the primary rRNA binding proteins. Required for association of the 30S and 50S subunits to form the 70S ribosome, for tRNA binding and peptide bond formation. It has been suggested to have peptidyltransferase activity; this is somewhat controversial. Makes several contacts with the 16S rRNA in the 70S ribosome. The sequence is that of Large ribosomal subunit protein uL2 from Gloeothece citriformis (strain PCC 7424) (Cyanothece sp. (strain PCC 7424)).